Reading from the N-terminus, the 308-residue chain is Glutamyl-Q tRNA(Asp) synthetase (308 aa).

L-glutamate-binding positions include 19–23 (RFAPS) and glutamate 55. A 'HIGH' region motif is present at residues 22 to 32 (PSPSGELHFGS). Residues cysteine 111, cysteine 113, tyrosine 125, and cysteine 129 each contribute to the Zn(2+) site. 2 residues coordinate L-glutamate: tyrosine 182 and arginine 200. The 'KMSKS' region signature appears at 238–242 (KLSKQ). Residue lysine 241 participates in ATP binding.

This sequence belongs to the class-I aminoacyl-tRNA synthetase family. GluQ subfamily. Zn(2+) is required as a cofactor.

In terms of biological role, catalyzes the tRNA-independent activation of glutamate in presence of ATP and the subsequent transfer of glutamate onto a tRNA(Asp). Glutamate is transferred on the 2-amino-5-(4,5-dihydroxy-2-cyclopenten-1-yl) moiety of the queuosine in the wobble position of the QUC anticodon. This chain is Glutamyl-Q tRNA(Asp) synthetase, found in Escherichia coli O6:H1 (strain CFT073 / ATCC 700928 / UPEC).